The primary structure comprises 491 residues: Protein nucleotidyltransferase YdiU (491 aa).

Glycine 88, glycine 90, arginine 91, lysine 111, aspartate 123, glycine 124, arginine 174, and arginine 181 together coordinate ATP. Aspartate 250 serves as the catalytic Proton acceptor. Mg(2+) contacts are provided by asparagine 251 and aspartate 260. Aspartate 260 lines the ATP pocket.

This sequence belongs to the SELO family. Mg(2+) serves as cofactor. Requires Mn(2+) as cofactor.

The catalysed reaction is L-seryl-[protein] + ATP = 3-O-(5'-adenylyl)-L-seryl-[protein] + diphosphate. The enzyme catalyses L-threonyl-[protein] + ATP = 3-O-(5'-adenylyl)-L-threonyl-[protein] + diphosphate. It carries out the reaction L-tyrosyl-[protein] + ATP = O-(5'-adenylyl)-L-tyrosyl-[protein] + diphosphate. It catalyses the reaction L-histidyl-[protein] + UTP = N(tele)-(5'-uridylyl)-L-histidyl-[protein] + diphosphate. The catalysed reaction is L-seryl-[protein] + UTP = O-(5'-uridylyl)-L-seryl-[protein] + diphosphate. The enzyme catalyses L-tyrosyl-[protein] + UTP = O-(5'-uridylyl)-L-tyrosyl-[protein] + diphosphate. In terms of biological role, nucleotidyltransferase involved in the post-translational modification of proteins. It can catalyze the addition of adenosine monophosphate (AMP) or uridine monophosphate (UMP) to a protein, resulting in modifications known as AMPylation and UMPylation. This chain is Protein nucleotidyltransferase YdiU, found in Rhodopseudomonas palustris (strain BisB18).